The sequence spans 398 residues: Elongation factor Tu (398 aa).

One can recognise a tr-type G domain in the interval 10–207 (KPHVNIGTIG…TADEYIPEPE (198 aa)). The tract at residues 19 to 26 (GHVDHGKT) is G1. A GTP-binding site is contributed by 19–26 (GHVDHGKT). Mg(2+) is bound at residue Thr26. The G2 stretch occupies residues 63–67 (GITIN). Residues 84–87 (DAPG) are G3. GTP contacts are provided by residues 84-88 (DAPGH) and 139-142 (NKID). A G4 region spans residues 139–142 (NKID). Residues 177 to 179 (SAL) are G5.

The protein belongs to the TRAFAC class translation factor GTPase superfamily. Classic translation factor GTPase family. EF-Tu/EF-1A subfamily. Monomer.

It localises to the cytoplasm. It carries out the reaction GTP + H2O = GDP + phosphate + H(+). Its function is as follows. GTP hydrolase that promotes the GTP-dependent binding of aminoacyl-tRNA to the A-site of ribosomes during protein biosynthesis. The chain is Elongation factor Tu from Streptococcus uberis (strain ATCC BAA-854 / 0140J).